The chain runs to 384 residues: Lipoprotein LprN (384 aa).

The first 20 residues, 1–20 (MNRIWLRAIILTASSALLAG), serve as a signal peptide directing secretion. A lipid anchor (N-palmitoyl cysteine) is attached at Cys21. Cys21 carries the S-diacylglycerol cysteine lipid modification.

Post-translationally, lipidated upon expression in E.coli.

It is found in the cell membrane. Its function is as follows. Stimulates the host (mouse) immune response; lipidated protein produced in E.coli stimulates T-cell proliferation in mice previously sensitized with LprN. Spleenocytes from these mice produce increased amounts of TNF-alpha and IFN-gamma, as well as somewhat increased nitric oxide levels, upon subsequent challenge with LprN. Previously sensitized mice infected with M.tuberculosis have an exacerbated disease response, suggesting this lipoprotein may down-regulate the host's immune response. The protein is Lipoprotein LprN (lprN) of Mycobacterium tuberculosis (strain ATCC 25618 / H37Rv).